The sequence spans 371 residues: 4-hydroxy-3-methylbut-2-en-1-yl diphosphate synthase (flavodoxin) (371 aa).

Residues C270, C273, C305, and E312 each contribute to the [4Fe-4S] cluster site.

It belongs to the IspG family. [4Fe-4S] cluster is required as a cofactor.

The catalysed reaction is (2E)-4-hydroxy-3-methylbut-2-enyl diphosphate + oxidized [flavodoxin] + H2O + 2 H(+) = 2-C-methyl-D-erythritol 2,4-cyclic diphosphate + reduced [flavodoxin]. It functions in the pathway isoprenoid biosynthesis; isopentenyl diphosphate biosynthesis via DXP pathway; isopentenyl diphosphate from 1-deoxy-D-xylulose 5-phosphate: step 5/6. Its function is as follows. Converts 2C-methyl-D-erythritol 2,4-cyclodiphosphate (ME-2,4cPP) into 1-hydroxy-2-methyl-2-(E)-butenyl 4-diphosphate. This is 4-hydroxy-3-methylbut-2-en-1-yl diphosphate synthase (flavodoxin) from Shewanella sp. (strain W3-18-1).